The following is a 371-amino-acid chain: Mannonate dehydratase (371 aa).

The protein belongs to the mannonate dehydratase family. Fe(2+) is required as a cofactor. It depends on Mn(2+) as a cofactor.

It catalyses the reaction D-mannonate = 2-dehydro-3-deoxy-D-gluconate + H2O. The protein operates within carbohydrate metabolism; pentose and glucuronate interconversion. Catalyzes the dehydration of D-mannonate. The chain is Mannonate dehydratase from Geobacillus thermodenitrificans (strain NG80-2).